The primary structure comprises 103 residues: Pyrimidine/purine nucleoside phosphorylase (103 aa).

The protein belongs to the nucleoside phosphorylase PpnP family.

It carries out the reaction a purine D-ribonucleoside + phosphate = a purine nucleobase + alpha-D-ribose 1-phosphate. It catalyses the reaction adenosine + phosphate = alpha-D-ribose 1-phosphate + adenine. The enzyme catalyses cytidine + phosphate = cytosine + alpha-D-ribose 1-phosphate. The catalysed reaction is guanosine + phosphate = alpha-D-ribose 1-phosphate + guanine. It carries out the reaction inosine + phosphate = alpha-D-ribose 1-phosphate + hypoxanthine. It catalyses the reaction thymidine + phosphate = 2-deoxy-alpha-D-ribose 1-phosphate + thymine. The enzyme catalyses uridine + phosphate = alpha-D-ribose 1-phosphate + uracil. The catalysed reaction is xanthosine + phosphate = alpha-D-ribose 1-phosphate + xanthine. In terms of biological role, catalyzes the phosphorolysis of diverse nucleosides, yielding D-ribose 1-phosphate and the respective free bases. Can use uridine, adenosine, guanosine, cytidine, thymidine, inosine and xanthosine as substrates. Also catalyzes the reverse reactions. In Methylobacillus flagellatus (strain ATCC 51484 / DSM 6875 / VKM B-1610 / KT), this protein is Pyrimidine/purine nucleoside phosphorylase.